The chain runs to 428 residues: Histidine--tRNA ligase (428 aa).

It belongs to the class-II aminoacyl-tRNA synthetase family. In terms of assembly, homodimer.

The protein localises to the cytoplasm. It carries out the reaction tRNA(His) + L-histidine + ATP = L-histidyl-tRNA(His) + AMP + diphosphate + H(+). The polypeptide is Histidine--tRNA ligase (Lactobacillus helveticus (strain DPC 4571)).